A 259-amino-acid polypeptide reads, in one-letter code: Trans-aconitate 2-methyltransferase (259 aa).

The protein belongs to the methyltransferase superfamily. Tam family.

It localises to the cytoplasm. It catalyses the reaction trans-aconitate + S-adenosyl-L-methionine = (E)-3-(methoxycarbonyl)pent-2-enedioate + S-adenosyl-L-homocysteine. Its function is as follows. Catalyzes the S-adenosylmethionine monomethyl esterification of trans-aconitate. This chain is Trans-aconitate 2-methyltransferase, found in Variovorax paradoxus (strain S110).